A 502-amino-acid chain; its full sequence is Probable glycine dehydrogenase (decarboxylating) subunit 2 (502 aa).

N6-(pyridoxal phosphate)lysine is present on K273.

The protein belongs to the GcvP family. C-terminal subunit subfamily. The glycine cleavage system is composed of four proteins: P, T, L and H. In this organism, the P 'protein' is a heterodimer of two subunits. It depends on pyridoxal 5'-phosphate as a cofactor.

The catalysed reaction is N(6)-[(R)-lipoyl]-L-lysyl-[glycine-cleavage complex H protein] + glycine + H(+) = N(6)-[(R)-S(8)-aminomethyldihydrolipoyl]-L-lysyl-[glycine-cleavage complex H protein] + CO2. Its function is as follows. The glycine cleavage system catalyzes the degradation of glycine. The P protein binds the alpha-amino group of glycine through its pyridoxal phosphate cofactor; CO(2) is released and the remaining methylamine moiety is then transferred to the lipoamide cofactor of the H protein. The polypeptide is Probable glycine dehydrogenase (decarboxylating) subunit 2 (Thermococcus onnurineus (strain NA1)).